The sequence spans 70 residues: UPF0352 protein Sfri_2492 (70 aa).

This sequence belongs to the UPF0352 family.

The chain is UPF0352 protein Sfri_2492 from Shewanella frigidimarina (strain NCIMB 400).